Reading from the N-terminus, the 574-residue chain is Membrane protein insertase YidC (574 aa).

The helical transmembrane segment at 6 to 26 threads the bilayer; sequence VFLIFAWLMVAALLWMEWGKD. Residues 45–77 form a disordered region; that stretch reads RDPDAAAPSAANVPSAQPIPQAGAPGTVPATSS. 5 helical membrane-spanning segments follow: residues 356–376, 380–400, 447–467, 489–509, and 525–545; these read FSIM…LHSF, WGWA…PLSA, GGCL…WVLV, PYFI…KLTP, and PLVF…YWVV.

This sequence belongs to the OXA1/ALB3/YidC family. Type 1 subfamily. As to quaternary structure, interacts with the Sec translocase complex via SecD. Specifically interacts with transmembrane segments of nascent integral membrane proteins during membrane integration.

The protein resides in the cell inner membrane. Required for the insertion and/or proper folding and/or complex formation of integral membrane proteins into the membrane. Involved in integration of membrane proteins that insert both dependently and independently of the Sec translocase complex, as well as at least some lipoproteins. Aids folding of multispanning membrane proteins. The polypeptide is Membrane protein insertase YidC (Xanthomonas euvesicatoria pv. vesicatoria (strain 85-10) (Xanthomonas campestris pv. vesicatoria)).